A 467-amino-acid chain; its full sequence is 3-isopropylmalate dehydratase large subunit (467 aa).

[4Fe-4S] cluster-binding residues include Cys-349, Cys-409, and Cys-412. The segment at 422 to 443 (PGQRSASTSNRNFEGRQGRGGR) is disordered.

This sequence belongs to the aconitase/IPM isomerase family. LeuC type 1 subfamily. As to quaternary structure, heterodimer of LeuC and LeuD. The cofactor is [4Fe-4S] cluster.

It catalyses the reaction (2R,3S)-3-isopropylmalate = (2S)-2-isopropylmalate. It participates in amino-acid biosynthesis; L-leucine biosynthesis; L-leucine from 3-methyl-2-oxobutanoate: step 2/4. Its function is as follows. Catalyzes the isomerization between 2-isopropylmalate and 3-isopropylmalate, via the formation of 2-isopropylmaleate. In Paramagnetospirillum magneticum (strain ATCC 700264 / AMB-1) (Magnetospirillum magneticum), this protein is 3-isopropylmalate dehydratase large subunit.